A 76-amino-acid chain; its full sequence is Secreted RxLR effector protein 31 (76 aa).

Residues M1–C24 form the signal peptide. The RxLR-dEER motif lies at R49–R64. N54 is a glycosylation site (N-linked (GlcNAc...) asparagine).

Belongs to the RxLR effector family.

Its subcellular location is the secreted. The protein localises to the host nucleus. It is found in the host cytoplasm. In terms of biological role, secreted effector that dos not suppress the host cell death induced by cell death-inducing proteins. This is Secreted RxLR effector protein 31 from Plasmopara viticola (Downy mildew of grapevine).